Reading from the N-terminus, the 459-residue chain is Bifunctional protein GlmU (459 aa).

The segment at Met-1 to Arg-230 is pyrophosphorylase. Residues Leu-9 to Gly-12, Lys-23, Gln-73, and Gly-78 to Thr-79 contribute to the UDP-N-acetyl-alpha-D-glucosamine site. Position 103 (Asp-103) interacts with Mg(2+). The UDP-N-acetyl-alpha-D-glucosamine site is built by Gly-140, Glu-155, Asn-170, and Asn-228. Residue Asn-228 coordinates Mg(2+). The linker stretch occupies residues Val-231–Asn-251. Positions Gly-252–Ser-459 are N-acetyltransferase. Arg-333 and Lys-351 together coordinate UDP-N-acetyl-alpha-D-glucosamine. Residue His-363 is the Proton acceptor of the active site. UDP-N-acetyl-alpha-D-glucosamine is bound by residues Tyr-366 and Asn-377. Acetyl-CoA is bound by residues Asn-386–Tyr-387, Ala-423, and Arg-440.

In the N-terminal section; belongs to the N-acetylglucosamine-1-phosphate uridyltransferase family. This sequence in the C-terminal section; belongs to the transferase hexapeptide repeat family. Homotrimer. Mg(2+) serves as cofactor.

It localises to the cytoplasm. It catalyses the reaction alpha-D-glucosamine 1-phosphate + acetyl-CoA = N-acetyl-alpha-D-glucosamine 1-phosphate + CoA + H(+). The enzyme catalyses N-acetyl-alpha-D-glucosamine 1-phosphate + UTP + H(+) = UDP-N-acetyl-alpha-D-glucosamine + diphosphate. It functions in the pathway nucleotide-sugar biosynthesis; UDP-N-acetyl-alpha-D-glucosamine biosynthesis; N-acetyl-alpha-D-glucosamine 1-phosphate from alpha-D-glucosamine 6-phosphate (route II): step 2/2. It participates in nucleotide-sugar biosynthesis; UDP-N-acetyl-alpha-D-glucosamine biosynthesis; UDP-N-acetyl-alpha-D-glucosamine from N-acetyl-alpha-D-glucosamine 1-phosphate: step 1/1. Its pathway is bacterial outer membrane biogenesis; LPS lipid A biosynthesis. In terms of biological role, catalyzes the last two sequential reactions in the de novo biosynthetic pathway for UDP-N-acetylglucosamine (UDP-GlcNAc). The C-terminal domain catalyzes the transfer of acetyl group from acetyl coenzyme A to glucosamine-1-phosphate (GlcN-1-P) to produce N-acetylglucosamine-1-phosphate (GlcNAc-1-P), which is converted into UDP-GlcNAc by the transfer of uridine 5-monophosphate (from uridine 5-triphosphate), a reaction catalyzed by the N-terminal domain. The sequence is that of Bifunctional protein GlmU from Bacillus cereus (strain G9842).